The chain runs to 352 residues: S-adenosylmethionine:tRNA ribosyltransferase-isomerase (352 aa).

The protein belongs to the QueA family. In terms of assembly, monomer.

The protein resides in the cytoplasm. The catalysed reaction is 7-aminomethyl-7-carbaguanosine(34) in tRNA + S-adenosyl-L-methionine = epoxyqueuosine(34) in tRNA + adenine + L-methionine + 2 H(+). It participates in tRNA modification; tRNA-queuosine biosynthesis. In terms of biological role, transfers and isomerizes the ribose moiety from AdoMet to the 7-aminomethyl group of 7-deazaguanine (preQ1-tRNA) to give epoxyqueuosine (oQ-tRNA). The protein is S-adenosylmethionine:tRNA ribosyltransferase-isomerase of Paraburkholderia xenovorans (strain LB400).